The following is a 463-amino-acid chain: Quinolone resistance protein NorB (463 aa).

Transmembrane regions (helical) follow at residues 17–37, 53–73, 86–106, 107–127, 142–162, 165–185, 201–221, 230–250, 273–293, 299–319, 334–354, 357–377, 403–423, and 435–455; these read IGIVLSVITFWLFAQSLVNVV, IAVSITALFSGMFVVGAGGLA, IILNILGSLLIIISNIPLLLI, IGRLIQGLSAACIMPATLSII, YWSIGSWGGSGVCSFFGGAVA, LGWRWIFILSIIISLIALFLI, FDIKGLVLLVIMLLTLNILIT, SLLFITLLAIAIGSFSLFIVL, TASNFLLNGVAGTLIVANTFV, YSSLQAGSLSITYLVMVLIMI, PMLIGTGVLIVGECLISLTFL, ILYVICCIIGYLFFGLGLGIY, MASALGGAFGVALSGAVYAIV, and IALWLNAGMGILSFVIILLLV.

Belongs to the major facilitator superfamily. TCR/Tet family.

The protein resides in the cell membrane. Multidrug efflux pump that acts independently of NorA and is one of the factors that confers resistance against diverse quinolones and chemical compounds. This chain is Quinolone resistance protein NorB (norB), found in Staphylococcus aureus (strain Mu3 / ATCC 700698).